The following is a 182-amino-acid chain: Adenine phosphoribosyltransferase (182 aa).

The protein belongs to the purine/pyrimidine phosphoribosyltransferase family. As to quaternary structure, homodimer.

Its subcellular location is the cytoplasm. The catalysed reaction is AMP + diphosphate = 5-phospho-alpha-D-ribose 1-diphosphate + adenine. Its pathway is purine metabolism; AMP biosynthesis via salvage pathway; AMP from adenine: step 1/1. Functionally, catalyzes a salvage reaction resulting in the formation of AMP, that is energically less costly than de novo synthesis. The chain is Adenine phosphoribosyltransferase from Saccharopolyspora erythraea (strain ATCC 11635 / DSM 40517 / JCM 4748 / NBRC 13426 / NCIMB 8594 / NRRL 2338).